The primary structure comprises 359 residues: Ribosomal RNA small subunit methyltransferase H (359 aa).

Residues Ala-39–His-41, Asp-58, Phe-87, Asp-108, and Gln-115 each bind S-adenosyl-L-methionine. A disordered region spans residues Ile-339–Gly-359. A compositionally biased stretch (basic residues) spans Asn-350–Gly-359.

It belongs to the methyltransferase superfamily. RsmH family.

It localises to the cytoplasm. The catalysed reaction is cytidine(1402) in 16S rRNA + S-adenosyl-L-methionine = N(4)-methylcytidine(1402) in 16S rRNA + S-adenosyl-L-homocysteine + H(+). Specifically methylates the N4 position of cytidine in position 1402 (C1402) of 16S rRNA. This Bifidobacterium longum (strain DJO10A) protein is Ribosomal RNA small subunit methyltransferase H.